The following is a 402-amino-acid chain: Protein arginine methyltransferase NDUFAF7 homolog, mitochondrial (402 aa).

It belongs to the NDUFAF7 family.

It localises to the mitochondrion. It catalyses the reaction L-arginyl-[protein] + 2 S-adenosyl-L-methionine = N(omega),N(omega)'-dimethyl-L-arginyl-[protein] + 2 S-adenosyl-L-homocysteine + 2 H(+). Arginine methyltransferase involved in the assembly or stability of mitochondrial NADH:ubiquinone oxidoreductase complex (complex I). The sequence is that of Protein arginine methyltransferase NDUFAF7 homolog, mitochondrial from Saccharomyces cerevisiae (strain ATCC 204508 / S288c) (Baker's yeast).